We begin with the raw amino-acid sequence, 282 residues long: tRNA pseudouridine synthase A (282 aa).

Asp-51 serves as the catalytic Nucleophile. Position 109 (Tyr-109) interacts with substrate.

It belongs to the tRNA pseudouridine synthase TruA family. As to quaternary structure, homodimer.

The enzyme catalyses uridine(38/39/40) in tRNA = pseudouridine(38/39/40) in tRNA. Its function is as follows. Formation of pseudouridine at positions 38, 39 and 40 in the anticodon stem and loop of transfer RNAs. This is tRNA pseudouridine synthase A from Delftia acidovorans (strain DSM 14801 / SPH-1).